A 362-amino-acid polypeptide reads, in one-letter code: Transcription factor bHLH133 (362 aa).

The region spanning 209–258 is the bHLH domain; it reads LQVPSSQSTLKVRKEKLGGRIASLHQLVSPFGKTDTASVLSEAIGYIRFL.

It belongs to the bHLH protein family. As to quaternary structure, homodimer.

It localises to the nucleus. The sequence is that of Transcription factor bHLH133 (BHLH133) from Arabidopsis thaliana (Mouse-ear cress).